The chain runs to 389 residues: Pyruvylated Gal-beta-1,3-epitope synthesis protein 2 (389 aa).

Residues 1–16 (MTKLWVNFFSQKLLRL) are Cytoplasmic-facing. The helical transmembrane segment at 17–37 (LIPSIIVVFAFAALFAIYSPI) threads the bilayer. The Lumenal segment spans residues 38–389 (QLGGINFYKR…WSNSFDLITA (352 aa)).

Its subcellular location is the endoplasmic reticulum membrane. It localises to the golgi apparatus membrane. Functionally, involved in cell wall biogenesis. Has a role in the addition of Gal-beta1,3 moeities to galactomannans and their subsequent pyruvylation. Has a role in meiosis. The polypeptide is Pyruvylated Gal-beta-1,3-epitope synthesis protein 2 (pvg2) (Schizosaccharomyces pombe (strain 972 / ATCC 24843) (Fission yeast)).